The primary structure comprises 265 residues: tRNA (guanine-N(1)-)-methyltransferase (265 aa).

Residues glycine 110 and 129–134 each bind S-adenosyl-L-methionine; that span reads LGDFVM. The tract at residues 243-265 is disordered; it reads LAAWGAPPPPLPKRRRGAKPNPN. Over residues 254–265 the composition is skewed to basic residues; sequence PKRRRGAKPNPN.

The protein belongs to the RNA methyltransferase TrmD family. Homodimer.

Its subcellular location is the cytoplasm. The enzyme catalyses guanosine(37) in tRNA + S-adenosyl-L-methionine = N(1)-methylguanosine(37) in tRNA + S-adenosyl-L-homocysteine + H(+). In terms of biological role, specifically methylates guanosine-37 in various tRNAs. The protein is tRNA (guanine-N(1)-)-methyltransferase of Deinococcus geothermalis (strain DSM 11300 / CIP 105573 / AG-3a).